The sequence spans 369 residues: CLIP domain-containing serine protease HP8 (369 aa).

The N-terminal stretch at 1-24 (MKTPFEKIRIISCILVIVSTNVVG) is a signal peptide. Positions 25-81 (QKCNGGANCIPLEECTDLFQQLKQGNSPQLTRLLRGLHCGFEDLNSPKICCPPEFLA) are excised as a propeptide. The Clip domain occupies 26–75 (KCNGGANCIPLEECTDLFQQLKQGNSPQLTRLLRGLHCGFEDLNSPKICC). 8 disulfide bridges follow: C27/C74, C33/C63, C39/C75, C105/C239, C142/C158, C186/C191, C286/C303, and C313/C344. Residues 113 to 368 (IFGGIQTEID…FMDWILSKLE (256 aa)) enclose the Peptidase S1 domain. The active-site Charge relay system is the H157. Residues E177, N179, T182, and D185 each coordinate Ca(2+). Residue N179 is glycosylated (N-linked (GlcNAc...) asparagine). Catalysis depends on D219, which acts as the Charge relay system. Residue S317 is the Charge relay system of the active site.

This sequence belongs to the peptidase S1 family. CLIP subfamily. In the active form, heterodimer of a light chain and a heavy chain; disulfide-linked. Post-translationally, proteolytically cleaved for activation. Cleavage produces a light chain and a catalytic heavy chain which remains covalently associated probably through an interchain disulfide bond. In terms of tissue distribution, in larvae, expressed in the fat body and hemocytes.

Its subcellular location is the secreted. The protein localises to the cytoplasm. Inhibited by (p-amidinophenyl) methanesulfonyl fluoride, p-nitrophenyl-p'-guanidinobenzoate, D-phenylalanyl-L-prolyl-L-arginyl chloromethane, leupeptin, antipain and to a lesser extent by antithrombin III. In terms of biological role, endopeptidase with selective post-Arg cleavage site. Functions in the innate immune response to fungal and Gram-positive bacterial infections. Upon pathogen infection promotes nodulation; a cellular defense response in which hemocytes surround and isolate invading pathogens forming aggregates called nodules. Involved in activating nodule formation in response to infection with M.luteus, E.coli or S.cerevisiae. Able to bind the microbes M.luteus, E.coli or S.cerevisiae. According to another report, does not bind microorganisms. The sequence is that of CLIP domain-containing serine protease HP8 from Bombyx mori (Silk moth).